Here is a 168-residue protein sequence, read N- to C-terminus: Sensor histidine kinase component HK1 (168 aa).

The 141-residue stretch at 1–141 folds into the Histidine kinase; second part domain; the sequence is MPITPLLHES…ELRITLPTPR (141 aa). Positions 137-168 are disordered; that stretch reads LPTPRPPFHEELPRITSSDTKDPNREHDTSDQ. The segment covering 143–168 has biased composition (basic and acidic residues); it reads PFHEELPRITSSDTKDPNREHDTSDQ.

As to quaternary structure, interacts with HK2.

It catalyses the reaction ATP + protein L-histidine = ADP + protein N-phospho-L-histidine.. In terms of biological role, member of the three-protein two-component system HK1/HK2/TcrA. Kinase that binds ATP and catalyzes the transfer of a phosphoryl group from ATP to HK2. The sequence is that of Sensor histidine kinase component HK1 from Mycobacterium tuberculosis (strain ATCC 25618 / H37Rv).